Consider the following 110-residue polypeptide: Protein RnfH (110 aa).

Residues 86 to 110 (RQRRVEKSRQEGSVEGRKWLPKDSR) form a disordered region. Positions 88–110 (RRVEKSRQEGSVEGRKWLPKDSR) are enriched in basic and acidic residues.

It belongs to the UPF0125 (RnfH) family.

The protein is Protein RnfH of Paraburkholderia phymatum (strain DSM 17167 / CIP 108236 / LMG 21445 / STM815) (Burkholderia phymatum).